The chain runs to 56 residues: Small ribosomal subunit protein uS14 (56 aa).

Zn(2+)-binding residues include cysteine 21, cysteine 24, cysteine 39, and cysteine 42.

Belongs to the universal ribosomal protein uS14 family. Zinc-binding uS14 subfamily. As to quaternary structure, part of the 30S ribosomal subunit. Requires Zn(2+) as cofactor.

In terms of biological role, binds 16S rRNA, required for the assembly of 30S particles. The protein is Small ribosomal subunit protein uS14 of Methanospirillum hungatei JF-1 (strain ATCC 27890 / DSM 864 / NBRC 100397 / JF-1).